Consider the following 448-residue polypeptide: ATP-dependent protease ATPase subunit HslU (448 aa).

Residues isoleucine 18, glycine 60–glutamate 65, aspartate 261, glutamate 326, and arginine 398 each bind ATP.

Belongs to the ClpX chaperone family. HslU subfamily. A double ring-shaped homohexamer of HslV is capped on each side by a ring-shaped HslU homohexamer. The assembly of the HslU/HslV complex is dependent on binding of ATP.

The protein resides in the cytoplasm. In terms of biological role, ATPase subunit of a proteasome-like degradation complex; this subunit has chaperone activity. The binding of ATP and its subsequent hydrolysis by HslU are essential for unfolding of protein substrates subsequently hydrolyzed by HslV. HslU recognizes the N-terminal part of its protein substrates and unfolds these before they are guided to HslV for hydrolysis. The polypeptide is ATP-dependent protease ATPase subunit HslU (Paraburkholderia phytofirmans (strain DSM 17436 / LMG 22146 / PsJN) (Burkholderia phytofirmans)).